The chain runs to 619 residues: 1-deoxy-D-xylulose-5-phosphate synthase (619 aa).

Residues histidine 74 and 115-117 (GHS) contribute to the thiamine diphosphate site. Aspartate 146 contacts Mg(2+). Residues 147-148 (GA), asparagine 175, tyrosine 285, and glutamate 365 each bind thiamine diphosphate. Asparagine 175 serves as a coordination point for Mg(2+).

It belongs to the transketolase family. DXPS subfamily. As to quaternary structure, homodimer. Requires Mg(2+) as cofactor. Thiamine diphosphate serves as cofactor.

The enzyme catalyses D-glyceraldehyde 3-phosphate + pyruvate + H(+) = 1-deoxy-D-xylulose 5-phosphate + CO2. It participates in metabolic intermediate biosynthesis; 1-deoxy-D-xylulose 5-phosphate biosynthesis; 1-deoxy-D-xylulose 5-phosphate from D-glyceraldehyde 3-phosphate and pyruvate: step 1/1. Catalyzes the acyloin condensation reaction between C atoms 2 and 3 of pyruvate and glyceraldehyde 3-phosphate to yield 1-deoxy-D-xylulose-5-phosphate (DXP). This is 1-deoxy-D-xylulose-5-phosphate synthase from Clostridium acetobutylicum (strain ATCC 824 / DSM 792 / JCM 1419 / IAM 19013 / LMG 5710 / NBRC 13948 / NRRL B-527 / VKM B-1787 / 2291 / W).